Reading from the N-terminus, the 175-residue chain is Bifunctional protein PyrR (175 aa).

Substrate contacts are provided by residues 40–41 (TR), R85, 102–110 (DDVLYTGRT), R135, and V159. The PRPP-binding signature appears at 98–110 (VIIIDDVLYTGRT).

Belongs to the purine/pyrimidine phosphoribosyltransferase family. PyrR subfamily. As to quaternary structure, homodimer and homohexamer; in equilibrium.

The catalysed reaction is UMP + diphosphate = 5-phospho-alpha-D-ribose 1-diphosphate + uracil. In terms of biological role, regulates transcriptional attenuation of the pyrimidine nucleotide (pyr) operon by binding in a uridine-dependent manner to specific sites on pyr mRNA. This disrupts an antiterminator hairpin in the RNA and favors formation of a downstream transcription terminator, leading to a reduced expression of downstream genes. Functionally, also displays a weak uracil phosphoribosyltransferase activity which is not physiologically significant. This Staphylococcus saprophyticus subsp. saprophyticus (strain ATCC 15305 / DSM 20229 / NCIMB 8711 / NCTC 7292 / S-41) protein is Bifunctional protein PyrR.